A 253-amino-acid chain; its full sequence is Transmembrane protein 69 (253 aa).

5 consecutive transmembrane segments (helical) span residues 104-124 (ALYL…LMNV), 137-157 (VAYG…FAIP), 165-185 (DWMN…ALLF), 192-212 (AAVL…ALLP), and 223-243 (AILT…SSVY).

It is found in the membrane. This is Transmembrane protein 69 (tmem69) from Xenopus tropicalis (Western clawed frog).